Reading from the N-terminus, the 532-residue chain is Pyruvate kinase (532 aa).

Residue Arg63 participates in substrate binding. Positions 65, 67, 99, and 100 each coordinate K(+). Asn65–His68 provides a ligand contact to ATP. The ATP site is built by Arg106 and Lys191. Glu256 provides a ligand contact to Mg(2+). Substrate-binding residues include Gly279, Asp280, and Thr312. Asp280 lines the Mg(2+) pocket.

Belongs to the pyruvate kinase family. As to quaternary structure, homotetramer. Mg(2+) serves as cofactor. Requires K(+) as cofactor.

It catalyses the reaction pyruvate + ATP = phosphoenolpyruvate + ADP + H(+). It participates in carbohydrate degradation; glycolysis; pyruvate from D-glyceraldehyde 3-phosphate: step 5/5. In Agaricus bisporus (White button mushroom), this protein is Pyruvate kinase (pkiA).